The sequence spans 699 residues: D-(-)-3-hydroxybutyrate oligomer hydrolase (699 aa).

The N-terminal stretch at 1 to 33 (MTAIRGGSRRAPGLALALLGGVLLGACHGDENA) is a signal peptide. The Charge relay system role is filled by S311.

The protein belongs to the D-(-)-3-hydroxybutyrate oligomer hydrolase family.

It localises to the secreted. The enzyme catalyses (3R)-hydroxybutanoate dimer + H2O = 2 (R)-3-hydroxybutanoate + H(+). It functions in the pathway lipid metabolism; butanoate metabolism. Its function is as follows. Participates in the degradation of poly-3-hydroxybutyrate (PHB). It works downstream of poly(3-hydroxybutyrate) depolymerase, hydrolyzing D(-)-3-hydroxybutyrate oligomers of various length (3HB-oligomers) into 3HB-monomers. This is D-(-)-3-hydroxybutyrate oligomer hydrolase from Burkholderia mallei (strain SAVP1).